The chain runs to 127 residues: MFSTLIFLTAVTLLMMPSQTVPAPLKDVNDIRVKGLLPLLRQRQLQIMPSQTIPALKDVNDIRVKGLLSLLRQRKQEIMPSQTIPALKDVNDIRVKGLLSLLRQRKQEECDDPDGLMCCTISEMPTC.

An N-terminal signal peptide occupies residues 1 to 20 (MFSTLIFLTAVTLLMMPSQT). Residues 42–43 (QR) constitute a propeptide that is removed on maturation. Gln-44 is subject to Pyrrolidone carboxylic acid. Residues 73–75 (QRK) constitute a propeptide that is removed on maturation. The residue at position 76 (Gln-76) is a Pyrrolidone carboxylic acid. Positions 104–106 (QRK) are excised as a propeptide. Gln-107 bears the Pyrrolidone carboxylic acid mark.

Post-translationally, the turripeptide OL172 conotoxin-like contains 2 disulfide bonds. As to expression, expressed by the venom duct.

It is found in the secreted. Its function is as follows. Acts as a neurotoxin by inhibiting an ion channel. The protein is Turripeptide OL172 of Iotyrris olangoensis (Sea snail).